The following is a 739-amino-acid chain: Lysine decarboxylase (739 aa).

Lys-367 is subject to N6-(pyridoxal phosphate)lysine. The segment covering 714–726 has biased composition (basic and acidic residues); sequence ADEPGDKPSDTVK. The tract at residues 714–739 is disordered; that stretch reads ADEPGDKPSDTVKKAPGKKPSAAKKS. A compositionally biased stretch (basic residues) spans 728 to 739; sequence APGKKPSAAKKS.

Belongs to the Orn/Lys/Arg decarboxylase class-I family. Pyridoxal 5'-phosphate is required as a cofactor.

The protein resides in the cytoplasm. The catalysed reaction is L-lysine + H(+) = cadaverine + CO2. This is Lysine decarboxylase from Hafnia alvei.